Here is a 163-residue protein sequence, read N- to C-terminus: Nucleotide-binding protein PC1_1036 (163 aa).

Belongs to the YajQ family.

Functionally, nucleotide-binding protein. This Pectobacterium carotovorum subsp. carotovorum (strain PC1) protein is Nucleotide-binding protein PC1_1036.